We begin with the raw amino-acid sequence, 405 residues long: Transposase from transposon Tn916 (405 aa).

One can recognise a Core-binding (CB) domain in the interval 79–163 (GKKMTLCQLY…SLKASFYIAI (85 aa)). The Tyr recombinase domain occupies 186–392 (VPKTVLTEEQ…TFDSAMAEMK (207 aa)). Residues Arg-225, Lys-264, His-343, Arg-346, and His-369 contribute to the active site. Tyr-379 acts as the O-(3'-phospho-DNA)-tyrosine intermediate in catalysis.

Belongs to the 'phage' integrase family.

The sequence is that of Transposase from transposon Tn916 (Int-Tn) from Enterococcus faecalis (Streptococcus faecalis).